The sequence spans 1022 residues: Integrator complex subunit 4 (1022 aa).

1D-myo-inositol hexakisphosphate is bound by residues Thr148 and Lys184. Positions 818–840 (KDEEEKPPVVETDMPMKESVSRD) are disordered.

Belongs to the Integrator subunit 4 family. In terms of assembly, belongs to the multiprotein complex Integrator, at least composed of IntS1, IntS2, IntS3, IntS4, omd/IntS5, IntS6, defl/IntS7, IntS8, IntS9, IntS10, IntS11, IntS12, asun/IntS13, IntS14 and IntS15. The core complex associates with protein phosphatase 2A subunits mts/PP2A and Pp2A-29B, to form the Integrator-PP2A (INTAC) complex. IntS4 is part of the RNA endonuclease subcomplex, composed of IntS4, IntS9, IntS11 and inositol hexakisphosphate (InsP6).

The protein resides in the nucleus. Component of the integrator complex, a multiprotein complex that terminates RNA polymerase II (Pol II) transcription in the promoter-proximal region of genes. The integrator complex provides a quality checkpoint during transcription elongation by driving premature transcription termination of transcripts that are unfavorably configured for transcriptional elongation: the complex terminates transcription by (1) catalyzing dephosphorylation of the C-terminal domain (CTD) of Pol II subunit Polr2A/Rbp1 and Spt5, and (2) degrading the exiting nascent RNA transcript via endonuclease activity. The integrator complex is also involved in the 3'-end processing of the U7 snRNA, and also the spliceosomal snRNAs U1, U2, U4 and U5. This chain is Integrator complex subunit 4, found in Drosophila melanogaster (Fruit fly).